Reading from the N-terminus, the 199-residue chain is Prolactin (199 aa).

The cysteines at positions 4 and 11 are disulfide-linked. Phosphoserine occurs at positions 26, 34, and 90. 2 disulfide bridges follow: C58–C174 and C191–C199.

Belongs to the somatotropin/prolactin family. Interacts with PRLR.

The protein resides in the secreted. Prolactin acts primarily on the mammary gland by promoting lactation. This chain is Prolactin (PRL), found in Loxodonta africana (African elephant).